Reading from the N-terminus, the 348-residue chain is Bombesin receptor-activated protein C6orf89 homolog (348 aa).

Over 1–58 (MDLAANEISIYDKLSETVDLVRQTGHQCGMSEKAIEKFIRQLLEKNEPQRGPPQYPLL) the chain is Cytoplasmic. The helical transmembrane segment at 59-79 (IAMYKVLLTLGLILFTAYFVI) threads the bilayer. The Extracellular segment spans residues 80–348 (QPFSSLAPEP…ICDGTTLSEL (269 aa)).

Homodimer. Interacts with BRS3. Interacts (via N-terminus) with SIN3B. Post-translationally, glycosylated.

It localises to the golgi apparatus membrane. It is found in the cytoplasm. Functionally, exhibits histone deacetylase (HDAC) enhancer properties. May play a role in cell cycle progression and wound repair of bronchial epithelial cells. The protein is Bombesin receptor-activated protein C6orf89 homolog of Rattus norvegicus (Rat).